Here is a 430-residue protein sequence, read N- to C-terminus: Adenylosuccinate synthetase (430 aa).

GTP is bound by residues 17 to 23 (GDEGKGK) and 45 to 47 (GHT). The Proton acceptor role is filled by Asp-18. Positions 18 and 45 each coordinate Mg(2+). IMP-binding positions include 18 to 21 (DEGK), 43 to 46 (NAGH), Thr-139, Arg-153, Asn-229, Thr-244, and Arg-308. Residue His-46 is the Proton donor of the active site. 304–310 (TVTGRRR) is a substrate binding site. Residues Arg-310, 336 to 338 (KLD), and 418 to 420 (GVG) each bind GTP.

It belongs to the adenylosuccinate synthetase family. Homodimer. Mg(2+) serves as cofactor.

Its subcellular location is the cytoplasm. It carries out the reaction IMP + L-aspartate + GTP = N(6)-(1,2-dicarboxyethyl)-AMP + GDP + phosphate + 2 H(+). It functions in the pathway purine metabolism; AMP biosynthesis via de novo pathway; AMP from IMP: step 1/2. Functionally, plays an important role in the de novo pathway and in the salvage pathway of purine nucleotide biosynthesis. Catalyzes the first committed step in the biosynthesis of AMP from IMP. The polypeptide is Adenylosuccinate synthetase (Cryptococcus neoformans var. neoformans serotype D (strain JEC21 / ATCC MYA-565) (Filobasidiella neoformans)).